The chain runs to 302 residues: MYYGFDVGGTKIEFGAFNEQLERVATERVATPTDDYAKLVETIAGLVHKYDAQFGVEGTVGLGIPGMEDADNGCVLTVNVPAAKGKPLRADLETKLGRAVKVENDANCFALSEAWDDELKEAASVMGLILGTGFGGGLVYEGKVFSGRNHVAGEIGHMRLPIDAWFHLGEKAPLLGCGCGNKGCMDNYLSGRGFELLYEHYYGEKKKAIDIITAQKEGESKAVEHVERFMELLAICFANIFTANDPHVVVLGGGLSNYDLIYEEMPKRVPKHLLSVAKCPKIVKAKHGDSGGVRGAAFLNIK.

Residues 4-11 (GFDVGGTK) and 133-140 (GFGGGLVY) contribute to the ATP site. The Zn(2+) site is built by His-157, Cys-177, Cys-179, and Cys-184.

The protein belongs to the ROK (NagC/XylR) family. NagK subfamily.

The enzyme catalyses N-acetyl-D-glucosamine + ATP = N-acetyl-D-glucosamine 6-phosphate + ADP + H(+). It functions in the pathway cell wall biogenesis; peptidoglycan recycling. Its function is as follows. Catalyzes the phosphorylation of N-acetyl-D-glucosamine (GlcNAc) derived from cell-wall degradation, yielding GlcNAc-6-P. The chain is N-acetyl-D-glucosamine kinase from Vibrio cholerae serotype O1 (strain ATCC 39315 / El Tor Inaba N16961).